Here is an 85-residue protein sequence, read N- to C-terminus: UPF0297 protein lhv_0439 (85 aa).

It belongs to the UPF0297 family.

In Lactobacillus helveticus (strain DPC 4571), this protein is UPF0297 protein lhv_0439.